We begin with the raw amino-acid sequence, 144 residues long: Maximins 10/H15 (144 aa).

An N-terminal signal peptide occupies residues 1-18; that stretch reads MNFKYIVAVSFLIASAYA. The propeptide occupies 19-43; it reads RSVQNDEQSLSQRDVLEEESLREIR. Ser70 is subject to Serine amide. Positions 74 to 123 are excised as a propeptide; the sequence is TAEDHEVMKRLEAVMRDLDSLDYPEEATERETRGFNQEEIANLFTKKEKR. Leu143 carries the post-translational modification Leucine amide.

This sequence belongs to the bombinin family. As to expression, expressed by the skin glands.

The protein resides in the secreted. Maximin-10 shows antimicrobial activity against bacteria and against the fungus C.albicans. It has little hemolytic activity. Its function is as follows. Maximin-H15 shows antimicrobial activity against bacteria and against the fungus C.albicans. Shows strong hemolytic activity. This chain is Maximins 10/H15, found in Bombina maxima (Giant fire-bellied toad).